Reading from the N-terminus, the 210-residue chain is Ribosomal RNA large subunit methyltransferase E (210 aa).

G61, W63, D81, D97, and D122 together coordinate S-adenosyl-L-methionine. The active-site Proton acceptor is the K162.

The protein belongs to the class I-like SAM-binding methyltransferase superfamily. RNA methyltransferase RlmE family.

It localises to the cytoplasm. It carries out the reaction uridine(2552) in 23S rRNA + S-adenosyl-L-methionine = 2'-O-methyluridine(2552) in 23S rRNA + S-adenosyl-L-homocysteine + H(+). Specifically methylates the uridine in position 2552 of 23S rRNA at the 2'-O position of the ribose in the fully assembled 50S ribosomal subunit. In Xanthomonas axonopodis pv. citri (strain 306), this protein is Ribosomal RNA large subunit methyltransferase E.